A 233-amino-acid chain; its full sequence is LexA repressor (233 aa).

Positions 26–46 form a DNA-binding region, H-T-H motif; that stretch reads FDEMKDALDLRSKSGIHRLIT. Catalysis depends on for autocatalytic cleavage activity residues serine 154 and lysine 192.

Belongs to the peptidase S24 family. In terms of assembly, homodimer.

It catalyses the reaction Hydrolysis of Ala-|-Gly bond in repressor LexA.. In terms of biological role, represses a number of genes involved in the response to DNA damage (SOS response), including recA and lexA. In the presence of single-stranded DNA, RecA interacts with LexA causing an autocatalytic cleavage which disrupts the DNA-binding part of LexA, leading to derepression of the SOS regulon and eventually DNA repair. This chain is LexA repressor, found in Nitrobacter hamburgensis (strain DSM 10229 / NCIMB 13809 / X14).